The sequence spans 320 residues: Cytochrome f (320 aa).

The first 35 residues, 1 to 35 (MQTINTFSWINQRITRSISVLLLVYIITRTSISSA), serve as a signal peptide directing secretion. The heme site is built by Tyr-36, Cys-56, Cys-59, and His-60. The helical transmembrane segment at 286–306 (VQGLLFFLASVILAQIFLVLK) threads the bilayer.

Belongs to the cytochrome f family. As to quaternary structure, the 4 large subunits of the cytochrome b6-f complex are cytochrome b6, subunit IV (17 kDa polypeptide, petD), cytochrome f and the Rieske protein, while the 4 small subunits are PetG, PetL, PetM and PetN. The complex functions as a dimer. Requires heme as cofactor.

It is found in the plastid thylakoid membrane. Its function is as follows. Component of the cytochrome b6-f complex, which mediates electron transfer between photosystem II (PSII) and photosystem I (PSI), cyclic electron flow around PSI, and state transitions. The protein is Cytochrome f of Cuscuta exaltata (Tall dodder).